A 1196-amino-acid polypeptide reads, in one-letter code: DNA-directed RNA polymerase subunit beta (1196 aa).

Residues 1152–1165 (EEEIEMRDLEDEED) are compositionally biased toward acidic residues. Positions 1152 to 1196 (EEEIEMRDLEDEEDAKQADGLALSGDEAPEETASPDVERDAVTKE) are disordered. The span at 1187–1196 (DVERDAVTKE) shows a compositional bias: basic and acidic residues.

This sequence belongs to the RNA polymerase beta chain family. As to quaternary structure, the RNAP catalytic core consists of 2 alpha, 1 beta, 1 beta' and 1 omega subunit. When a sigma factor is associated with the core the holoenzyme is formed, which can initiate transcription.

It carries out the reaction RNA(n) + a ribonucleoside 5'-triphosphate = RNA(n+1) + diphosphate. Functionally, DNA-dependent RNA polymerase catalyzes the transcription of DNA into RNA using the four ribonucleoside triphosphates as substrates. This chain is DNA-directed RNA polymerase subunit beta, found in Bacillus velezensis (strain DSM 23117 / BGSC 10A6 / LMG 26770 / FZB42) (Bacillus amyloliquefaciens subsp. plantarum).